We begin with the raw amino-acid sequence, 281 residues long: Octanoyl-[GcvH]:protein N-octanoyltransferase (281 aa).

In terms of domain architecture, BPL/LPL catalytic spans 44–250; the sequence is GESAATMRSW…TLQQFAPKLT (207 aa). The active-site Acyl-thioester intermediate is C149.

It belongs to the octanoyltransferase LipL family.

The catalysed reaction is N(6)-octanoyl-L-lysyl-[glycine-cleavage complex H protein] + L-lysyl-[lipoyl-carrier protein] = N(6)-octanoyl-L-lysyl-[lipoyl-carrier protein] + L-lysyl-[glycine-cleavage complex H protein]. It participates in protein modification; protein lipoylation via endogenous pathway; protein N(6)-(lipoyl)lysine from octanoyl-[acyl-carrier-protein]. In terms of biological role, catalyzes the amidotransfer (transamidation) of the octanoyl moiety from octanoyl-GcvH to the lipoyl domain of the E2 subunit of lipoate-dependent enzymes. This chain is Octanoyl-[GcvH]:protein N-octanoyltransferase, found in Bacillus anthracis.